A 127-amino-acid chain; its full sequence is Large ribosomal subunit protein bL12 (127 aa).

The protein belongs to the bacterial ribosomal protein bL12 family. In terms of assembly, homodimer. Part of the ribosomal stalk of the 50S ribosomal subunit. Forms a multimeric L10(L12)X complex, where L10 forms an elongated spine to which 2 to 4 L12 dimers bind in a sequential fashion. Binds GTP-bound translation factors.

Functionally, forms part of the ribosomal stalk which helps the ribosome interact with GTP-bound translation factors. Is thus essential for accurate translation. This is Large ribosomal subunit protein bL12 from Nitratiruptor sp. (strain SB155-2).